A 385-amino-acid polypeptide reads, in one-letter code: S-adenosylmethionine synthase (385 aa).

Position 16 (histidine 16) interacts with ATP. Aspartate 18 serves as a coordination point for Mg(2+). Position 44 (glutamate 44) interacts with K(+). The L-methionine site is built by glutamate 57 and glutamine 100. The tract at residues glutamine 100–lysine 110 is flexible loop. Residues aspartate 165–lysine 167, arginine 231–phenylalanine 232, aspartate 240, arginine 246–lysine 247, alanine 263, and lysine 267 contribute to the ATP site. L-methionine is bound at residue aspartate 240. Lysine 271 contacts L-methionine.

Belongs to the AdoMet synthase family. In terms of assembly, homotetramer; dimer of dimers. Mg(2+) is required as a cofactor. K(+) serves as cofactor.

The protein localises to the cytoplasm. The catalysed reaction is L-methionine + ATP + H2O = S-adenosyl-L-methionine + phosphate + diphosphate. Its pathway is amino-acid biosynthesis; S-adenosyl-L-methionine biosynthesis; S-adenosyl-L-methionine from L-methionine: step 1/1. In terms of biological role, catalyzes the formation of S-adenosylmethionine (AdoMet) from methionine and ATP. The overall synthetic reaction is composed of two sequential steps, AdoMet formation and the subsequent tripolyphosphate hydrolysis which occurs prior to release of AdoMet from the enzyme. The protein is S-adenosylmethionine synthase of Vibrio cholerae serotype O1 (strain ATCC 39315 / El Tor Inaba N16961).